Here is a 344-residue protein sequence, read N- to C-terminus: uncharacterized protein (344 aa).

Positions 38 and 167 each coordinate NADP(+).

The protein belongs to the NAD(P)-dependent epimerase/dehydratase family. Dihydroflavonol-4-reductase subfamily.

This is an uncharacterized protein from Saccharomyces cerevisiae (strain ATCC 204508 / S288c) (Baker's yeast).